The primary structure comprises 141 residues: Nucleoside diphosphate kinase (141 aa).

6 residues coordinate ATP: Lys10, Phe58, Arg86, Thr92, Arg103, and Asn113. His116 acts as the Pros-phosphohistidine intermediate in catalysis.

It belongs to the NDK family. Homotetramer. It depends on Mg(2+) as a cofactor.

It localises to the cytoplasm. The catalysed reaction is a 2'-deoxyribonucleoside 5'-diphosphate + ATP = a 2'-deoxyribonucleoside 5'-triphosphate + ADP. It catalyses the reaction a ribonucleoside 5'-diphosphate + ATP = a ribonucleoside 5'-triphosphate + ADP. Functionally, major role in the synthesis of nucleoside triphosphates other than ATP. The ATP gamma phosphate is transferred to the NDP beta phosphate via a ping-pong mechanism, using a phosphorylated active-site intermediate. This chain is Nucleoside diphosphate kinase, found in Hydrogenovibrio crunogenus (strain DSM 25203 / XCL-2) (Thiomicrospira crunogena).